Here is a 246-residue protein sequence, read N- to C-terminus: Apolipoprotein L domain-containing protein 1 (246 aa).

The next 2 helical transmembrane spans lie at 50-72 and 89-109; these read SLAA…IVGL and GLGV…SLIF. Residues 193 to 220 are a coiled coil; that stretch reads LKAKIQKLSESLESCTGALDELSEQLES.

It belongs to the apolipoprotein L family. Present at low levels in brain vascular cells (at protein level).

It localises to the cell membrane. The protein localises to the cell junction. The protein resides in the cytoplasmic vesicle. Its subcellular location is the secretory vesicle. Its function is as follows. Is a modulator of endothelial barrier permeability, required for proper organization of endothelial cell-cell junctions and cytoskeleton. It also plays a role in the modulation of secretory autophagy. May affect blood-brain barrier permeability. The chain is Apolipoprotein L domain-containing protein 1 (Apold1) from Rattus norvegicus (Rat).